A 475-amino-acid chain; its full sequence is ATP synthase subunit beta (475 aa).

Residue 155–162 coordinates ATP; sequence GGAGVGKT.

It belongs to the ATPase alpha/beta chains family. F-type ATPases have 2 components, CF(1) - the catalytic core - and CF(0) - the membrane proton channel. CF(1) has five subunits: alpha(3), beta(3), gamma(1), delta(1), epsilon(1). CF(0) has three main subunits: a(1), b(2) and c(9-12). The alpha and beta chains form an alternating ring which encloses part of the gamma chain. CF(1) is attached to CF(0) by a central stalk formed by the gamma and epsilon chains, while a peripheral stalk is formed by the delta and b chains.

It localises to the cell inner membrane. It catalyses the reaction ATP + H2O + 4 H(+)(in) = ADP + phosphate + 5 H(+)(out). Its function is as follows. Produces ATP from ADP in the presence of a proton gradient across the membrane. The catalytic sites are hosted primarily by the beta subunits. This is ATP synthase subunit beta from Rhizobium etli (strain ATCC 51251 / DSM 11541 / JCM 21823 / NBRC 15573 / CFN 42).